We begin with the raw amino-acid sequence, 642 residues long: Chaperone protein DnaK (642 aa).

T196 carries the post-translational modification Phosphothreonine; by autocatalysis. A compositionally biased stretch (polar residues) spans 593-603 (STMYQTPSGDT). Residues 593 to 642 (STMYQTPSGDTPPSEPETGASEESKGGDKTQGDGEVDAEYEVIDGNDKDK) form a disordered region. Over residues 614-624 (EESKGGDKTQG) the composition is skewed to basic and acidic residues. Acidic residues predominate over residues 626–636 (GEVDAEYEVID).

Belongs to the heat shock protein 70 family.

In terms of biological role, acts as a chaperone. This Chlorobium phaeobacteroides (strain BS1) protein is Chaperone protein DnaK.